We begin with the raw amino-acid sequence, 796 residues long: YY1-associated protein 1 (796 aa).

2 disordered regions span residues 1–45 and 463–488; these read MEEE…ATPS and IQPS…SEAP. A compositionally biased stretch (basic and acidic residues) spans 23–36; it reads PPDKREGSAVDPGK. The segment covering 463 to 472 has biased composition (low complexity); that stretch reads IQPSPSLQPS. The span at 473-485 shows a compositional bias: polar residues; it reads FNPGKTPAQSTHS. Ser-724 is subject to Phosphoserine. Positions 755–776 are disordered; sequence RQALEPLPQGIQESLNNSSPGD. A compositionally biased stretch (polar residues) spans 765–774; it reads IQESLNNSSP.

In terms of assembly, interacts with YY1. Interacts with MAD2L2. Interacts with INO80. Ubiquitous. Detected in small intestine, skeletal muscle, lung, pancreas, brain, stomach, spleen, colon and heart. Detected at very low levels in healthy liver. Highly expressed in most liver carcinomas.

The protein resides in the cytoplasm. It localises to the nucleus. The protein localises to the nucleoplasm. It is found in the nucleolus. Functionally, associates with the INO80 chromatin remodeling complex, which is responsible for transcriptional regulation, DNA repair, and replication. Enhances transcription activation by YY1. Plays a role in cell cycle regulation. The sequence is that of YY1-associated protein 1 from Homo sapiens (Human).